Reading from the N-terminus, the 247-residue chain is ATP synthase subunit a, chloroplastic (247 aa).

5 helical membrane-spanning segments follow: residues 28 to 48, 95 to 115, 134 to 154, 199 to 219, and 220 to 240; these read GQVL…CLLG, VPFL…GALI, INTT…AGIS, LVVG…IMLL, and GLFT…AYIG.

It belongs to the ATPase A chain family. As to quaternary structure, F-type ATPases have 2 components, CF(1) - the catalytic core - and CF(0) - the membrane proton channel. CF(1) has five subunits: alpha(3), beta(3), gamma(1), delta(1), epsilon(1). CF(0) has four main subunits: a, b, b' and c.

The protein resides in the plastid. Its subcellular location is the chloroplast thylakoid membrane. Its function is as follows. Key component of the proton channel; it plays a direct role in the translocation of protons across the membrane. This Chlorella vulgaris (Green alga) protein is ATP synthase subunit a, chloroplastic.